The sequence spans 96 residues: Large ribosomal subunit protein uL23 (96 aa).

Belongs to the universal ribosomal protein uL23 family. In terms of assembly, part of the 50S ribosomal subunit. Contacts protein L29, and trigger factor when it is bound to the ribosome.

Its function is as follows. One of the early assembly proteins it binds 23S rRNA. One of the proteins that surrounds the polypeptide exit tunnel on the outside of the ribosome. Forms the main docking site for trigger factor binding to the ribosome. The protein is Large ribosomal subunit protein uL23 of Oleidesulfovibrio alaskensis (strain ATCC BAA-1058 / DSM 17464 / G20) (Desulfovibrio alaskensis).